A 406-amino-acid chain; its full sequence is Kelch domain-containing protein 2 (406 aa).

Kelch repeat units lie at residues 31–85, 92–136, 148–207, 221–259, 271–311, and 322–359; these read ERSG…NTEG, SGSC…ERID, LGVW…IWSQ, HACA…NELI, HSLT…IKFN, and HTAC…IFSV.

In terms of assembly, component of a CRL2(KLHDC2) E3 ubiquitin-protein ligase complex, also named ECS(KLHDC2) complex, composed of CUL2, Elongin BC (ELOB and ELOC), RBX1 and substrate-specific adapter KLHDC2. May form oligomers as a KLHDC2-ELOB-ELOC complex; this interaction is autoinhibitory for the E3 ligase complex as the substrate-binding site of KLHDC2 is blocked in the oligomer. Interacts with CREB3; interaction is direct and specific as it does not interact with CREB1, ATF4, ATF6, JUN, FOS, CEBPA or herpes simplex virus transactivator VP16. In terms of processing, autoubiquitinated by the CRL2(KLHDC2) E3 ligase complex.

It is found in the nucleus. It functions in the pathway protein modification; protein ubiquitination. In terms of biological role, substrate-recognition component of a Cul2-RING (CRL2) E3 ubiquitin-protein ligase complex of the DesCEND (destruction via C-end degrons) pathway, which recognizes a C-degron located at the extreme C terminus of target proteins, leading to their ubiquitination and degradation. The C-degron recognized by the DesCEND pathway is usually a motif of less than ten residues and can be present in full-length proteins, truncated proteins or proteolytically cleaved forms. The CRL2(KLHDC2) complex specifically recognizes proteins with a diglycine (Gly-Gly) at the C-terminus, leading to their ubiquitination and degradation. The CRL2(KLHDC2) complex mediates ubiquitination and degradation of truncated SELENOK and SELENOS selenoproteins produced by failed UGA/Sec decoding, which end with a diglycine. The CRL2(KLHDC2) complex also recognizes proteolytically cleaved proteins ending with Gly-Gly, such as the N-terminal fragment of USP1, leading to their degradation. May also act as an indirect repressor of CREB3-mediated transcription by interfering with CREB3-DNA-binding. In Bos taurus (Bovine), this protein is Kelch domain-containing protein 2.